The chain runs to 115 residues: Virion-associated protein (115 aa).

Coiled-coil stretches lie at residues 1–28 (MAATLSEIRELIQSLTKTANEIKAMLER) and 33–54 (KPTGIEEAAAKIIKDIGDKIDQ). A compositionally biased stretch (polar residues) spans 96-106 (GNEELGSSGNP). Positions 96 to 115 (GNEELGSSGNPNAVKWPPRK) are disordered.

This sequence belongs to the caulimovirus ORF III family. Homotetramer, through coiled-coil domain. Homotrimer when interacts with icosehadral capsid. Interacts with capsid protein, and with Movement protein.

The protein resides in the virion. It is found in the host cell junction. It localises to the host plasmodesma. In terms of biological role, plays a role in virus cell-to-cell and plant-to-plant transmission. Interacts with virion icosahedral capsid and movement protein, thereby facilitating virion cell-to-cell transmission through plasmodesmata opened by viral movement protein. Also interacts with aphid transmission factor, attaching the virion to aphid stylet when the animal feeds on an virus infected plant. Aphid saliva may later detach the virion, inducing release of infectious particles when the animal feeds on a new plant. This chain is Virion-associated protein, found in Scrophularia californica (California bee plant).